Here is an 850-residue protein sequence, read N- to C-terminus: Endoribonuclease ysh-1 (850 aa).

Zn(2+) is bound by residues His83, His85, Asp87, His88, His173, and Asp194. The Proton donor role is filled by His442. Residue His464 participates in Zn(2+) binding. 2 disordered regions span residues 685-708 (VKRS…PHSH) and 732-784 (SPIV…EQQL). The span at 744–754 (PTTKAITSPSE) shows a compositional bias: polar residues. A compositionally biased stretch (basic and acidic residues) spans 755–766 (ETAKSSDVKSDA). The span at 767–781 (DADASMDVSEEDEDE) shows a compositional bias: acidic residues.

It belongs to the metallo-beta-lactamase superfamily. RNA-metabolizing metallo-beta-lactamase-like family. CPSF2/YSH1 subfamily.

Its subcellular location is the nucleus. Functionally, component of the cleavage factor I (CF I) involved in pre-mRNA 3'-end processing. The protein is Endoribonuclease ysh-1 (ysh-1) of Neurospora crassa (strain ATCC 24698 / 74-OR23-1A / CBS 708.71 / DSM 1257 / FGSC 987).